Here is a 191-residue protein sequence, read N- to C-terminus: MSLISRLKAVVAGDDYLDDDFDELDYASEDELNGVNDYKENRKNSNALSNSNPFDFMNNNRSSNVVGMPGISNSSSEVSLMEPRSFDEMPQAIQALRERKTVILNLTMMDPDQAQRAVDFVAGGTYAIDGHQERVGESIFLFAPSCVNVTSSFPEEVSPSNISSKKTSPYSLETNTTPEPAWGESKLSAFS.

The span at 153–178 shows a compositional bias: polar residues; it reads FPEEVSPSNISSKKTSPYSLETNTTP. The segment at 153-191 is disordered; that stretch reads FPEEVSPSNISSKKTSPYSLETNTTPEPAWGESKLSAFS.

The protein belongs to the SepF family. As to quaternary structure, homodimer. Interacts with FtsZ.

It is found in the cytoplasm. Cell division protein that is part of the divisome complex and is recruited early to the Z-ring. Probably stimulates Z-ring formation, perhaps through the cross-linking of FtsZ protofilaments. Its function overlaps with FtsA. In Prochlorococcus marinus (strain MIT 9515), this protein is Cell division protein SepF.